Here is a 259-residue protein sequence, read N- to C-terminus: Tryptophan synthase alpha chain (259 aa).

Catalysis depends on proton acceptor residues glutamate 35 and aspartate 46.

Belongs to the TrpA family. Tetramer of two alpha and two beta chains.

The catalysed reaction is (1S,2R)-1-C-(indol-3-yl)glycerol 3-phosphate + L-serine = D-glyceraldehyde 3-phosphate + L-tryptophan + H2O. It functions in the pathway amino-acid biosynthesis; L-tryptophan biosynthesis; L-tryptophan from chorismate: step 5/5. In terms of biological role, the alpha subunit is responsible for the aldol cleavage of indoleglycerol phosphate to indole and glyceraldehyde 3-phosphate. This Methanococcus maripaludis (strain C5 / ATCC BAA-1333) protein is Tryptophan synthase alpha chain.